Here is a 229-residue protein sequence, read N- to C-terminus: Ribonuclease 3 (229 aa).

Residues 4–133 form the RNase III domain; it reads WEELQESVGF…FIGALYLDNG (130 aa). A Mg(2+)-binding site is contributed by glutamate 46. Aspartate 50 is an active-site residue. 2 residues coordinate Mg(2+): aspartate 119 and glutamate 122. The active site involves glutamate 122. Residues 159 to 228 enclose the DRBM domain; it reads DYKTQLQEIV…AQFAINQLTH (70 aa).

The protein belongs to the ribonuclease III family. Homodimer. Mg(2+) is required as a cofactor.

It localises to the cytoplasm. It carries out the reaction Endonucleolytic cleavage to 5'-phosphomonoester.. Digests double-stranded RNA. Involved in the processing of primary rRNA transcript to yield the immediate precursors to the large and small rRNAs (23S and 16S). Processes some mRNAs, and tRNAs when they are encoded in the rRNA operon. Processes pre-crRNA and tracrRNA of type II CRISPR loci if present in the organism. This Listeria monocytogenes serotype 4a (strain HCC23) protein is Ribonuclease 3.